Reading from the N-terminus, the 585-residue chain is Pre-hexon-linking protein IIIa (585 aa).

The tract at residues 1–24 (MMQDATDPAVRAALQSQPSGLNST) is disordered. The tract at residues 1–106 (MMQDATDPAV…ALLQRVARYN (106 aa)) is peripentonal hexon-tethering domain. Residues 14–24 (LQSQPSGLNST) are compositionally biased toward polar residues. Residues 138 to 251 (GSMVALNAFL…FTDSGSVSRD (114 aa)) are binding to hexon-linking protein. A Phosphoserine; by host modification is found at serine 225. Position 274 is a phosphothreonine; by host (threonine 274). Phosphoserine; by host occurs at positions 310, 444, 449, 450, 452, 469, and 473. Positions 438–475 (AALRKESFRRPSSLSDLGAAAPRSDASSPFPSLIGSFT) are disordered. The span at 462-475 (DASSPFPSLIGSFT) shows a compositional bias: polar residues. Position 490 is a phosphotyrosine; by host (tyrosine 490). A phosphoserine; by host mark is found at serine 494 and serine 515. The disordered stretch occupies residues 528–573 (QEHRDVPGPRPPTRRQRHDRQRGLVWEDDDSADDSSVLDLGGSGNP). Residues 571–585 (GNPFAHLRPRLGRMF) constitute a propeptide that is removed on maturation.

The protein belongs to the adenoviridae hexon-linking protein IIIa family. In terms of assembly, interacts with hexon proteins; this interaction tethers the peripentonal hexons to hexons situated in the facet. Interacts with the penton protein (via N-terminus). Interacts with packaging protein 3; this interaction is required to promote correct genome packaging. Cleaved near the C-terminus by the viral protease during virion maturation to form the mature protein.

It localises to the virion. It is found in the host nucleus. In terms of biological role, structural component of the virion that acts as a cement protein on the capsid exterior which mediates the interactions between the hexons, including the peripentonal hexons, and reaches all the way to the penton vertices. Two hexon linking proteins IIIa, one from each facet, stabilize the unique edge interface between a pair of facets. As the virus enters the host cell, hexon linking proteins IIIa are shed concomitant with virion acidification in the endosome. During virus assembly, seems to play a role in the serotype specificity of the packaging of viral DNA via its interaction with packaging protein 3. The protein is Pre-hexon-linking protein IIIa of Human adenovirus C serotype 2 (HAdV-2).